The chain runs to 130 residues: Small ribosomal subunit protein uS11 (130 aa).

This sequence belongs to the universal ribosomal protein uS11 family. Part of the 30S ribosomal subunit. Interacts with proteins S7 and S18. Binds to IF-3.

In terms of biological role, located on the platform of the 30S subunit, it bridges several disparate RNA helices of the 16S rRNA. Forms part of the Shine-Dalgarno cleft in the 70S ribosome. The chain is Small ribosomal subunit protein uS11 from Syntrophobacter fumaroxidans (strain DSM 10017 / MPOB).